A 451-amino-acid chain; its full sequence is Acetylornithine aminotransferase, mitochondrial (451 aa).

At lysine 302 the chain carries N6-(pyridoxal phosphate)lysine.

Belongs to the class-III pyridoxal-phosphate-dependent aminotransferase family. Pyridoxal 5'-phosphate is required as a cofactor. As to expression, found at highest levels in nodules, confined to the infected cells.

The protein resides in the mitochondrion. It carries out the reaction N(2)-acetyl-L-ornithine + 2-oxoglutarate = N-acetyl-L-glutamate 5-semialdehyde + L-glutamate. It participates in amino-acid biosynthesis; L-arginine biosynthesis; N(2)-acetyl-L-ornithine from L-glutamate: step 4/4. In terms of biological role, involved in the biosynthesis of citrulline. The protein is Acetylornithine aminotransferase, mitochondrial (AG118) of Alnus glutinosa (European alder).